Reading from the N-terminus, the 1837-residue chain is Nucleoporin nup211 (1837 aa).

3 coiled-coil regions span residues 59–378 (EVNY…YDEI), 415–519 (YKQK…ELDL), and 559–625 (VFRN…QLRY). A Phosphothreonine modification is found at threonine 650. Coiled-coil stretches lie at residues 661–1163 (EQTS…NKLL), 1222–1637 (LDNR…ENTH), and 1675–1712 (KAKI…PEKT). The interval 1464–1521 (KDSNHQLQESASSDAEQITKEQFEQLKSEKERTEKELADSKNELEHLQSEAVDADGKT) is disordered. The span at 1468–1479 (HQLQESASSDAE) shows a compositional bias: polar residues. Over residues 1480-1521 (QITKEQFEQLKSEKERTEKELADSKNELEHLQSEAVDADGKT) the composition is skewed to basic and acidic residues. Serine 1558 carries the phosphoserine modification. The residue at position 1560 (threonine 1560) is a Phosphothreonine. Serine 1563 bears the Phosphoserine mark. Disordered stretches follow at residues 1602-1642 (EKEK…NIDD) and 1700-1837 (ENLN…KKAK). Over residues 1617-1628 (KSQRIKELEEQA) the composition is skewed to basic and acidic residues. 4 stretches are compositionally biased toward polar residues: residues 1700 to 1730 (ENLN…SKPT), 1753 to 1763 (KSLSARLQGTG), 1795 to 1814 (IATS…TAKS), and 1827 to 1837 (GGSSSNQKKAK).

It localises to the cytoplasm. The protein localises to the nucleus. In terms of biological role, functions as a component of the nuclear pore complex (NPC). NPC components, collectively referred to as nucleoporins (NUPs), can play the role of both NPC structural components and of docking or interaction partners for transiently associated nuclear transport factors. Active directional transport is assured by both, a Phe-Gly (FG) repeat affinity gradient for these transport factors across the NPC and a transport cofactor concentration gradient across the nuclear envelope. The chain is Nucleoporin nup211 (nup211) from Schizosaccharomyces pombe (strain 972 / ATCC 24843) (Fission yeast).